A 1829-amino-acid chain; its full sequence is Iron-regulated protein FrpC (1829 aa).

Hemolysin-type calcium-binding repeat units follow at residues phenylalanine 869–leucine 886, isoleucine 887–tyrosine 904, asparagine 1015–leucine 1032, asparagine 1033–leucine 1050, asparagine 1051–leucine 1068, asparagine 1069–leucine 1086, isoleucine 1087–tyrosine 1104, asparagine 1215–leucine 1232, asparagine 1233–leucine 1250, aspartate 1251–leucine 1268, asparagine 1269–leucine 1286, isoleucine 1287–tyrosine 1304, asparagine 1415–leucine 1432, asparagine 1433–leucine 1450, aspartate 1451–leucine 1468, asparagine 1469–leucine 1486, isoleucine 1487–tyrosine 1504, asparagine 1615–leucine 1632, asparagine 1633–leucine 1650, asparagine 1651–leucine 1668, asparagine 1669–leucine 1686, and isoleucine 1687–tyrosine 1704.

Belongs to the RTX prokaryotic toxin (TC 1.C.11) family.

Its subcellular location is the cell outer membrane. It is found in the secreted. Functionally, may participate in the pathogenesis of meningococcal disease. This chain is Iron-regulated protein FrpC (frpC), found in Neisseria meningitidis serogroup C.